A 354-amino-acid polypeptide reads, in one-letter code: Dye-decolorizing peroxidase (354 aa).

D165 serves as the catalytic Proton acceptor. Heme is bound at residue H238. A targeting peptide region spans residues 312–335 (GLFFSPTVDFLDDPPPLPAPGTPA). The span at 324–337 (DPPPLPAPGTPAAP) shows a compositional bias: pro residues. A disordered region spans residues 324–354 (DPPPLPAPGTPAAPPARNGSLSIGSLKGTTR). The span at 342–354 (GSLSIGSLKGTTR) shows a compositional bias: polar residues.

The protein belongs to the DyP-type peroxidase family. Found in a complex with type 1 encapsulin, strongly suggesting it is found in a type 1 encapsulin nanocompartment. Homotetramer, presumably also in the type 1 encapsulin nanocompartment. Heme b is required as a cofactor.

The protein resides in the encapsulin nanocompartment. The protein localises to the cell membrane. It carries out the reaction 2 a phenolic donor + H2O2 = 2 a phenolic radical donor + 2 H2O. Cargo protein of a type 1 encapsulin nanocompartment. A heme-dependent peroxidase. This cargo-loaded encapsulin nanocompartment is probably involved in protection against oxidative damage. The chain is Dye-decolorizing peroxidase from Mycolicibacterium paratuberculosis (strain ATCC BAA-968 / K-10) (Mycobacterium paratuberculosis).